Consider the following 64-residue polypeptide: Large ribosomal subunit protein uL1 (64 aa).

The protein belongs to the universal ribosomal protein uL1 family. In terms of assembly, part of the 50S ribosomal subunit.

Functionally, binds directly to 23S rRNA. The L1 stalk is quite mobile in the ribosome, and is involved in E site tRNA release. In terms of biological role, protein L1 is also a translational repressor protein, it controls the translation of the L11 operon by binding to its mRNA. This is Large ribosomal subunit protein uL1 (rplA) from Streptomyces lavendulae.